The following is a 175-amino-acid chain: Cuticle protein 16.5, isoform A (175 aa).

19 tandem repeats follow at residues A17–A20, A25–A28, A31–A34, A38–A41, A44–A47, A51–A54, A57–A60, A64–A67, A70–A73, A77–A80, A83–A86, A91–A94, A99–A102, A106–A109, A134–A137, A144–A147, A151–A154, A158–A161, and A165–A168.

In terms of biological role, component of the cuticle of migratory locust which contains more than 100 different structural proteins. The protein is Cuticle protein 16.5, isoform A of Locusta migratoria (Migratory locust).